The following is a 247-amino-acid chain: tRNA pseudouridine synthase A 1 (247 aa).

Catalysis depends on aspartate 53, which acts as the Nucleophile. Tyrosine 111 is a substrate binding site.

This sequence belongs to the tRNA pseudouridine synthase TruA family. As to quaternary structure, homodimer.

It catalyses the reaction uridine(38/39/40) in tRNA = pseudouridine(38/39/40) in tRNA. Its function is as follows. Formation of pseudouridine at positions 38, 39 and 40 in the anticodon stem and loop of transfer RNAs. In Bacillus cereus (strain ATCC 10987 / NRS 248), this protein is tRNA pseudouridine synthase A 1.